Consider the following 219-residue polypeptide: 7-cyano-7-deazaguanine synthase (219 aa).

10–20 (FSGGQDSTTCL) contacts ATP. Zn(2+)-binding residues include C186, C195, C198, and C201.

The protein belongs to the QueC family. In terms of assembly, homodimer. It depends on Zn(2+) as a cofactor.

The catalysed reaction is 7-carboxy-7-deazaguanine + NH4(+) + ATP = 7-cyano-7-deazaguanine + ADP + phosphate + H2O + H(+). It functions in the pathway purine metabolism; 7-cyano-7-deazaguanine biosynthesis. Functionally, catalyzes the ATP-dependent conversion of 7-carboxy-7-deazaguanine (CDG) to 7-cyano-7-deazaguanine (preQ(0)). This chain is 7-cyano-7-deazaguanine synthase, found in Bacillus licheniformis (strain ATCC 14580 / DSM 13 / JCM 2505 / CCUG 7422 / NBRC 12200 / NCIMB 9375 / NCTC 10341 / NRRL NRS-1264 / Gibson 46).